The chain runs to 409 residues: NADH-quinone oxidoreductase subunit D (409 aa).

This sequence belongs to the complex I 49 kDa subunit family. NDH-1 is composed of 14 different subunits. Subunits NuoB, C, D, E, F, and G constitute the peripheral sector of the complex.

It localises to the cell inner membrane. It catalyses the reaction a quinone + NADH + 5 H(+)(in) = a quinol + NAD(+) + 4 H(+)(out). Its function is as follows. NDH-1 shuttles electrons from NADH, via FMN and iron-sulfur (Fe-S) centers, to quinones in the respiratory chain. The immediate electron acceptor for the enzyme in this species is believed to be ubiquinone. Couples the redox reaction to proton translocation (for every two electrons transferred, four hydrogen ions are translocated across the cytoplasmic membrane), and thus conserves the redox energy in a proton gradient. The sequence is that of NADH-quinone oxidoreductase subunit D from Helicobacter acinonychis (strain Sheeba).